Consider the following 224-residue polypeptide: Ribose-5-phosphate isomerase A (224 aa).

Substrate-binding positions include 26–29, 81–84, and 94–97; these read TGST, DGAD, and KGGG. Glu103 acts as the Proton acceptor in catalysis. Lys121 contributes to the substrate binding site.

This sequence belongs to the ribose 5-phosphate isomerase family. In terms of assembly, homodimer.

The catalysed reaction is aldehydo-D-ribose 5-phosphate = D-ribulose 5-phosphate. Its pathway is carbohydrate degradation; pentose phosphate pathway; D-ribose 5-phosphate from D-ribulose 5-phosphate (non-oxidative stage): step 1/1. Catalyzes the reversible conversion of ribose-5-phosphate to ribulose 5-phosphate. The protein is Ribose-5-phosphate isomerase A of Listeria innocua serovar 6a (strain ATCC BAA-680 / CLIP 11262).